Reading from the N-terminus, the 381-residue chain is cAMP-dependent protein kinase type I-beta regulatory subunit (381 aa).

Residues 1–136 are dimerization and phosphorylation; that stretch reads MASPSCFHSE…ALAKAISKNV (136 aa). Serine 3 carries the post-translational modification Phosphoserine. Tyrosine 21 carries the post-translational modification 3'-nitrotyrosine. The segment at 66-88 is disordered; sequence LARQKSNSQCDSHDEEISPTPPN. A phosphoserine mark is found at serine 77 and serine 83. A Phosphothreonine modification is found at threonine 85. Residues 96 to 100 carry the Pseudophosphorylation motif motif; it reads RRGGV. Residue arginine 97 is modified to Omega-N-methylarginine. Residues 137 to 254, glutamate 202, arginine 211, 255 to 381, glutamate 326, and arginine 335 contribute to the 3',5'-cyclic AMP site; these read LFSH…SKVS and ILES…SLTV.

It belongs to the cAMP-dependent kinase regulatory chain family. The inactive holoenzyme is composed of two regulatory chains and two catalytic chains. Activation by cAMP releases the two active catalytic monomers and the regulatory dimer. Interacts with PRKX; regulates this cAMP-dependent protein kinase. Interacts with smAKAP; this interaction may target PRKAR1B to the plasma membrane. In terms of processing, the pseudophosphorylation site binds to the substrate-binding region of the catalytic chain, resulting in the inhibition of its activity. In terms of tissue distribution, abundant in brain and testis. No expression in lung, heart, liver, spleen, kidney and skeletal muscle.

It is found in the cell membrane. Its function is as follows. Regulatory subunit of the cAMP-dependent protein kinases involved in cAMP signaling in cells. The sequence is that of cAMP-dependent protein kinase type I-beta regulatory subunit (Prkar1b) from Rattus norvegicus (Rat).